We begin with the raw amino-acid sequence, 634 residues long: Pescadillo homolog (634 aa).

Positions 321–414 (RLRTLFKGLK…QLLPTNKYFM (94 aa)) constitute a BRCT domain. Disordered regions lie at residues 437–473 (EEKA…EEIE), 491–561 (EYKK…RKAE), and 603–634 (NIDA…LKMA). Ser453 carries the post-translational modification Phosphoserine. Composition is skewed to acidic residues over residues 454-473 (DDDD…EEIE) and 501-527 (VNED…DVEQ). Coiled-coil stretches lie at residues 460 to 546 (SDAE…KVES) and 596 to 629 (LLRK…AAAK). Basic and acidic residues-rich tracts occupy residues 528–548 (LDDK…ESGK) and 603–623 (NIDA…KKAA). Over residues 624 to 634 (AEAAAKALKMA) the composition is skewed to low complexity.

The protein belongs to the pescadillo family.

It localises to the nucleus. The protein localises to the nucleolus. It is found in the nucleoplasm. Required for maturation of ribosomal RNAs and formation of the large ribosomal subunit. The sequence is that of Pescadillo homolog from Drosophila willistoni (Fruit fly).